Consider the following 394-residue polypeptide: A-type flagellin (394 aa).

It belongs to the bacterial flagellin family. In terms of processing, phosphorylated on tyrosine residue(s). Flagellin from strain 5939 but not from strain 170018 is glycosylated.

It is found in the secreted. It localises to the bacterial flagellum. Functionally, flagellin is the subunit protein which polymerizes to form the filaments of bacterial flagella. This Pseudomonas aeruginosa protein is A-type flagellin (fliC).